The primary structure comprises 338 residues: MTVGDGDDIHAVGGSVRHIPVLLGEVLEALAPAERDIIIDGTFGAGGYTRAILATGASVVAIDRDPDAIAAGRDLEVQSGGRLRLVQAPFSTLDEHVESADGVVLDIGVSSMQLDQAERGFSFRFDGPLDMRMAQAGLSAADVVNSFKPGDLARIFGFLGEERHAGRIARMIEARREKKPFEGTLELADAIETHIGRAPKDKIHPATRVFQALRIYVNDELGELAKALFAAERALKPGGRLVVVTFHSLEDRIVKRFIADRADVATGSRHLPEAQARTATFRKAGGGVTAGDAEVAANPRARSARLRAAIRTEAPARAGDFSIFGLPKLPGIDRPGER.

Residues 46–48, Asp-63, Phe-90, Asp-106, and Gln-113 contribute to the S-adenosyl-L-methionine site; that span reads GGY.

The protein belongs to the methyltransferase superfamily. RsmH family.

Its subcellular location is the cytoplasm. The enzyme catalyses cytidine(1402) in 16S rRNA + S-adenosyl-L-methionine = N(4)-methylcytidine(1402) in 16S rRNA + S-adenosyl-L-homocysteine + H(+). Specifically methylates the N4 position of cytidine in position 1402 (C1402) of 16S rRNA. The sequence is that of Ribosomal RNA small subunit methyltransferase H from Mesorhizobium japonicum (strain LMG 29417 / CECT 9101 / MAFF 303099) (Mesorhizobium loti (strain MAFF 303099)).